Consider the following 351-residue polypeptide: Protein Wnt-2b-A (351 aa).

Residues 1–16 (MHFAYILILLILTPRV) form the signal peptide. 11 cysteine pairs are disulfide-bonded: cysteine 67/cysteine 78, cysteine 118/cysteine 126, cysteine 128/cysteine 148, cysteine 197/cysteine 211, cysteine 199/cysteine 206, cysteine 269/cysteine 300, cysteine 285/cysteine 295, cysteine 299/cysteine 339, cysteine 315/cysteine 330, cysteine 317/cysteine 327, and cysteine 322/cysteine 323. A glycan (N-linked (GlcNAc...) asparagine) is linked at asparagine 77. Serine 203 is lipidated: O-palmitoleoyl serine; by PORCN.

The protein belongs to the Wnt family. Palmitoleoylation is required for efficient binding to frizzled receptors. Depalmitoleoylation leads to Wnt signaling pathway inhibition. As to expression, expressed maternally in both vegetal and animal blastomeres with enrichment in the animal hemisphere. Expressed zygotically near the prosencephalic-mesencephalic boundary of the developing brain in neurula and tailbud stages, and also in non-brain areas at tadpole stages.

The protein localises to the secreted. It localises to the extracellular space. It is found in the extracellular matrix. In terms of biological role, ligand for members of the frizzled family of seven transmembrane receptors. Functions in the canonical Wnt/beta-catenin signaling pathway. This chain is Protein Wnt-2b-A (wnt2b-a), found in Xenopus laevis (African clawed frog).